The primary structure comprises 189 residues: Protein Rex (189 aa).

Residues 1–16 (MPKTRRGPRRSQRKRP) are compositionally biased toward basic residues. The segment at 1 to 26 (MPKTRRGPRRSQRKRPPTPWPTSQGL) is disordered. A Nuclear localization signal, and RNA-binding (RxRE) motif is present at residues 2–18 (PKTRRGPRRSQRKRPPT). A homomultimerization region spans residues 56–70 (RPAYIVTPYWPPVQS). S70 is subject to Phosphoserine; by host. A Nuclear export signal motif is present at residues 82–93 (LSAQLYSSLSLG). Positions 87–189 (YSSLSLGSPP…PPSPGPSCPR (103 aa)) are disordered. Residues 115-125 (IQPPTFHPPSS) are compositionally biased toward pro residues. Residues 123-131 (PSSRPYANT) are homomultimerization. At T174 the chain carries Phosphothreonine; by host. S177 is modified (phosphoserine; by host). Residues 178-189 (FPPPSPGPSCPR) show a composition bias toward pro residues.

This sequence belongs to the deltaretrovirus Rex protein family. In terms of assembly, homomultimer. Multimeric assembly is essential for activity and involves XPO1. Binds to human XPO1 and KPNB1. Interacts (via N-terminal nuclear localization signal) with human NPM1. Post-translationally, phosphorylated.

It is found in the host nucleus. The protein resides in the host nucleolus. The protein localises to the host cytoplasm. Functionally, rex escorts unspliced gag-pro-pol and singly spliced env mRNAs out of the nucleus of infected cells. These mRNAs carry a recognition sequence called Rex responsive element (RxRE or XRE) located at the 3' region of the long terminal repeat (LTR). This function is essential since most HTLV proteins are translated from unspliced or partially spliced pre-mRNAs that cannot exit the nucleus by the pathway used by fully processed cellular mRNAs. Rex itself is translated from a fully spliced mRNA that probably readily exits the nucleus. Rex's nuclear localization signal (NLS) binds directly to KPNB1/importin beta-1 without previous binding to KPNA1/importin alpha-1. KPNB1 binds to the GDP bound form of RAN (Ran-GDP) and targets Rex to the nucleus. In the nucleus, the conversion from Ran-GDP to Ran-GTP dissociates Rex from KPNB1 and allows Rex's binding to the RRE in viral pre-mRNAs. Rex multimerizes on the RRE via cooperative assembly. This multimerization is critical for its full biological activity, since it may shield the viral RNA from being spliced or down-regulated, and probably exposes Rex's nuclear export signal (NES) to the surface. Rex can then form a complex with XPO1/CRM1, RANBP3 and Ran-GTP, leading to nuclear export of the complex. Conversion from Ran-GTP to Ran-GDP mediates dissociation of the Rex/RRE/XPO1/RANBP3/RAN complex, so that Rex can return to the nucleus for a subsequent round of export. This is Protein Rex from Homo sapiens (Human).